The following is a 1055-amino-acid chain: RapA guanosine triphosphatase-activating protein 1 (1055 aa).

6 disordered regions span residues 76–100, 256–292, 418–525, 544–570, 603–629, and 943–969; these read LSPQ…EEER, NHQP…SSLT, QQLL…FLGV, THAT…SPPL, TTQL…PPSE, and NNNS…NLPT. Residues 89 to 100 show a composition bias toward basic and acidic residues; sequence QHEKITPEEEER. Composition is skewed to low complexity over residues 262–292, 442–455, and 469–482; these read STPR…SSLT, DFNL…NNNN, and TTTT…NNNN. Over residues 483-494 the composition is skewed to polar residues; sequence ISPQHSGTSGSP. Composition is skewed to low complexity over residues 603 to 622 and 943 to 966; these read TTQL…TSQP and NNNS…SDSN. Positions 779–1048 constitute a Rap-GAP domain; sequence LIQFEAKNIH…RTRKEFLHSF (270 aa).

The protein resides in the cytoplasm. It is found in the cell cortex. Mediates the deactivation of rap1 and plays an important role in spatially and temporally regulating cell adhesion and chemotaxis by controlling attachment disassembly in the leading edge through the regulation of myosin II assembly and disassembly. Overexpression leads to defective chemotaxis. This chain is RapA guanosine triphosphatase-activating protein 1 (rapgap1), found in Dictyostelium discoideum (Social amoeba).